The chain runs to 438 residues: 3-phosphoshikimate 1-carboxyvinyltransferase (438 aa).

3-phosphoshikimate is bound by residues lysine 28, serine 29, and arginine 33. Residue lysine 28 participates in phosphoenolpyruvate binding. Glycine 97 and arginine 125 together coordinate phosphoenolpyruvate. 3-phosphoshikimate-binding residues include serine 168, serine 169, glutamine 170, glutamate 316, and histidine 343. A phosphoenolpyruvate-binding site is contributed by glutamine 170. Glutamate 316 functions as the Proton acceptor in the catalytic mechanism. Phosphoenolpyruvate-binding residues include arginine 347, arginine 388, and lysine 413.

Belongs to the EPSP synthase family. In terms of assembly, monomer.

The protein resides in the cytoplasm. The catalysed reaction is 3-phosphoshikimate + phosphoenolpyruvate = 5-O-(1-carboxyvinyl)-3-phosphoshikimate + phosphate. Its pathway is metabolic intermediate biosynthesis; chorismate biosynthesis; chorismate from D-erythrose 4-phosphate and phosphoenolpyruvate: step 6/7. Its function is as follows. Catalyzes the transfer of the enolpyruvyl moiety of phosphoenolpyruvate (PEP) to the 5-hydroxyl of shikimate-3-phosphate (S3P) to produce enolpyruvyl shikimate-3-phosphate and inorganic phosphate. The polypeptide is 3-phosphoshikimate 1-carboxyvinyltransferase (Rhodococcus jostii (strain RHA1)).